The chain runs to 228 residues: 2-C-methyl-D-erythritol 4-phosphate cytidylyltransferase (228 aa).

Belongs to the IspD/TarI cytidylyltransferase family. IspD subfamily.

It catalyses the reaction 2-C-methyl-D-erythritol 4-phosphate + CTP + H(+) = 4-CDP-2-C-methyl-D-erythritol + diphosphate. It participates in isoprenoid biosynthesis; isopentenyl diphosphate biosynthesis via DXP pathway; isopentenyl diphosphate from 1-deoxy-D-xylulose 5-phosphate: step 2/6. Catalyzes the formation of 4-diphosphocytidyl-2-C-methyl-D-erythritol from CTP and 2-C-methyl-D-erythritol 4-phosphate (MEP). In Actinobacillus pleuropneumoniae serotype 5b (strain L20), this protein is 2-C-methyl-D-erythritol 4-phosphate cytidylyltransferase.